The following is a 108-amino-acid chain: Abdominal ganglion neuropeptide R3-14 (108 aa).

An N-terminal signal peptide occupies residues 1-23 (MQVLHLCLAVSIAVALLSQAAWS). E24 and E52 each carry pyrrolidone carboxylic acid (Glu); partial. Q66 bears the Pyrrolidone carboxylic acid mark.

Post-translationally, the partial formation of pyroglutamate from N-terminal glutamic acid in peptides isolated from single cells is detected by mass spectrometry. There are indications this modification depends on a heat sensitive factor. As to expression, neurons R3-R14. A cluster of 12 giant neurons located on the right side of the abdominal ganglion.

The protein localises to the secreted. In terms of biological role, HRBP is a myoactive peptide that excites Aplysia heart and enhances gut motility in vitro. This is Abdominal ganglion neuropeptide R3-14 from Aplysia californica (California sea hare).